Reading from the N-terminus, the 432-residue chain is Glutamyl-tRNA reductase (432 aa).

Substrate is bound by residues 49–52 (TCNR), serine 101, 106–108 (ESQ), and glutamine 112. Cysteine 50 acts as the Nucleophile in catalysis. An NADP(+)-binding site is contributed by 181–186 (GTGETI).

This sequence belongs to the glutamyl-tRNA reductase family. In terms of assembly, homodimer.

The catalysed reaction is (S)-4-amino-5-oxopentanoate + tRNA(Glu) + NADP(+) = L-glutamyl-tRNA(Glu) + NADPH + H(+). It functions in the pathway porphyrin-containing compound metabolism; protoporphyrin-IX biosynthesis; 5-aminolevulinate from L-glutamyl-tRNA(Glu): step 1/2. In terms of biological role, catalyzes the NADPH-dependent reduction of glutamyl-tRNA(Glu) to glutamate 1-semialdehyde (GSA). The polypeptide is Glutamyl-tRNA reductase (Xylella fastidiosa (strain M12)).